A 693-amino-acid polypeptide reads, in one-letter code: Golgin subfamily A member 6D (693 aa).

Residues L14–L611 are a coiled coil. 3 disordered regions span residues N20–Q70, L497–Q547, and V662–T693. The segment covering L537–Q547 has biased composition (basic and acidic residues). Residues P674–T693 are compositionally biased toward polar residues.

This sequence belongs to the GOLGA6 family.

The polypeptide is Golgin subfamily A member 6D (GOLGA6D) (Homo sapiens (Human)).